The primary structure comprises 83 residues: Small ribosomal subunit protein bS20 (83 aa).

The protein belongs to the bacterial ribosomal protein bS20 family.

Functionally, binds directly to 16S ribosomal RNA. The sequence is that of Small ribosomal subunit protein bS20 from Flavobacterium psychrophilum (strain ATCC 49511 / DSM 21280 / CIP 103535 / JIP02/86).